The sequence spans 283 residues: GTPase Era (283 aa).

The Era-type G domain maps to 7-175 (YCGHVIIVGK…KNIIKSYLPE (169 aa)). Residues 15-22 (GKANVGKS) are G1. 15 to 22 (GKANVGKS) provides a ligand contact to GTP. The segment at 41–45 (NTTQS) is G2. The G3 stretch occupies residues 62–65 (DTPG). GTP contacts are provided by residues 62–66 (DTPGV) and 124–127 (NKID). The segment at 124–127 (NKID) is G4. The interval 154 to 156 (ISA) is G5. Positions 198–283 (IREQLILFLG…HLVLWVKDKN (86 aa)) constitute a KH type-2 domain.

This sequence belongs to the TRAFAC class TrmE-Era-EngA-EngB-Septin-like GTPase superfamily. Era GTPase family. As to quaternary structure, monomer.

The protein resides in the cytoplasm. It is found in the cell membrane. Functionally, an essential GTPase that binds both GDP and GTP, with rapid nucleotide exchange. Plays a role in 16S rRNA processing and 30S ribosomal subunit biogenesis and possibly also in cell cycle regulation and energy metabolism. The sequence is that of GTPase Era from Buchnera aphidicola subsp. Acyrthosiphon pisum (strain APS) (Acyrthosiphon pisum symbiotic bacterium).